Reading from the N-terminus, the 233-residue chain is Cobalt-containing nitrile hydratase subunit beta (233 aa).

Belongs to the nitrile hydratase subunit beta family. Heterotetramer of two alpha and two beta chains.

The catalysed reaction is an aliphatic primary amide = an aliphatic nitrile + H2O. NHase catalyzes the hydration of various nitrile compounds to the corresponding amides. The polypeptide is Cobalt-containing nitrile hydratase subunit beta (Pseudonocardia thermophila).